Consider the following 171-residue polypeptide: Dual specificity protein phosphatase OPG106 (171 aa).

The Tyrosine-protein phosphatase domain occupies 23–171; the sequence is SPTIMTRVTN…IIEKYVIDKN (149 aa). The active-site Phosphocysteine intermediate is C110.

It belongs to the protein-tyrosine phosphatase family. Non-receptor class dual specificity subfamily. As to quaternary structure, homodimer.

Its subcellular location is the virion. It localises to the host cytoplasm. The catalysed reaction is O-phospho-L-tyrosyl-[protein] + H2O = L-tyrosyl-[protein] + phosphate. It catalyses the reaction O-phospho-L-seryl-[protein] + H2O = L-seryl-[protein] + phosphate. In terms of biological role, serine/tyrosine phosphatase which down-regulates cellular antiviral response by dephosphorylating activated host STAT1 and blocking interferon (IFN)-stimulated innate immune responses. Dephosphorylates the OPG144 protein. This Homo sapiens (Human) protein is Dual specificity protein phosphatase OPG106 (OPG106).